A 550-amino-acid chain; its full sequence is Hydroxylamine reductase (550 aa).

The [2Fe-2S] cluster site is built by Cys3, Cys6, Cys18, and Cys25. The hybrid [4Fe-2O-2S] cluster site is built by His249, Glu273, Cys317, Cys405, Cys433, Cys458, Glu492, and Lys494. Cys405 is modified (cysteine persulfide).

Belongs to the HCP family. [2Fe-2S] cluster serves as cofactor. Hybrid [4Fe-2O-2S] cluster is required as a cofactor.

It is found in the cytoplasm. The catalysed reaction is A + NH4(+) + H2O = hydroxylamine + AH2 + H(+). Catalyzes the reduction of hydroxylamine to form NH(3) and H(2)O. The protein is Hydroxylamine reductase of Escherichia coli (strain SE11).